Consider the following 176-residue polypeptide: 2-oxo-4-hydroxy-4-carboxy-5-ureidoimidazoline decarboxylase (176 aa).

The active-site Proton donor; for OHCU decarboxylase activity is the histidine 70. Substrate-binding positions include proline 71, 83 to 87 (SQEEQ), and 118 to 122 (FIMAV). A disordered region spans residues 72-96 (DLGERTEMTDESQEEQASAGLDRLP).

This sequence belongs to the OHCU decarboxylase family.

The catalysed reaction is 5-hydroxy-2-oxo-4-ureido-2,5-dihydro-1H-imidazole-5-carboxylate + H(+) = (S)-allantoin + CO2. Its pathway is purine metabolism; urate degradation; (S)-allantoin from urate: step 3/3. Its function is as follows. Catalyzes the stereoselective decarboxylation of 2-oxo-4-hydroxy-4-carboxy-5-ureidoimidazoline (OHCU) to (S)-allantoin. The protein is 2-oxo-4-hydroxy-4-carboxy-5-ureidoimidazoline decarboxylase of Halalkalicoccus jeotgali (strain DSM 18796 / CECT 7217 / JCM 14584 / KCTC 4019 / B3).